The sequence spans 121 residues: Small ribosomal subunit protein uS13 (121 aa).

The tract at residues 91 to 121 is disordered; sequence HRMSLPVRGQRTRTNARTRRGSRKTVAGRKK. Positions 100–121 are enriched in basic residues; the sequence is QRTRTNARTRRGSRKTVAGRKK.

Belongs to the universal ribosomal protein uS13 family. Part of the 30S ribosomal subunit. Forms a loose heterodimer with protein S19. Forms two bridges to the 50S subunit in the 70S ribosome.

Located at the top of the head of the 30S subunit, it contacts several helices of the 16S rRNA. In the 70S ribosome it contacts the 23S rRNA (bridge B1a) and protein L5 of the 50S subunit (bridge B1b), connecting the 2 subunits; these bridges are implicated in subunit movement. Contacts the tRNAs in the A and P-sites. This Prochlorococcus marinus (strain MIT 9515) protein is Small ribosomal subunit protein uS13.